The primary structure comprises 399 residues: Tryptophan synthase beta chain (399 aa).

Lys92 bears the N6-(pyridoxal phosphate)lysine mark.

It belongs to the TrpB family. As to quaternary structure, tetramer of two alpha and two beta chains. Pyridoxal 5'-phosphate is required as a cofactor.

The catalysed reaction is (1S,2R)-1-C-(indol-3-yl)glycerol 3-phosphate + L-serine = D-glyceraldehyde 3-phosphate + L-tryptophan + H2O. Its pathway is amino-acid biosynthesis; L-tryptophan biosynthesis; L-tryptophan from chorismate: step 5/5. Functionally, the beta subunit is responsible for the synthesis of L-tryptophan from indole and L-serine. The chain is Tryptophan synthase beta chain from Legionella pneumophila subsp. pneumophila (strain Philadelphia 1 / ATCC 33152 / DSM 7513).